We begin with the raw amino-acid sequence, 229 residues long: Protein GLC8 (229 aa).

Disordered stretches follow at residues 1–21 (MGGI…QQDP), 35–62 (TQKN…EIIG), and 107–229 (QFQD…TKEP). At serine 12 the chain carries Phosphoserine. Residues 107 to 117 (QFQDIHIDEPK) show a composition bias toward basic and acidic residues. Residue threonine 118 is modified to Phosphothreonine; by PHO85. Serine 158 is subject to Phosphoserine. Positions 164 to 173 (FEIKENKQPD) are enriched in basic and acidic residues. Over residues 175-184 (ETNDENDEDS) the composition is skewed to acidic residues. The residue at position 184 (serine 184) is a Phosphoserine. Positions 185-196 (PEARHKKFEEMR) are enriched in basic and acidic residues.

Post-translationally, phosphorylated by the cyclin-CDKs PCL6-PHO85 and PCL7-PHO85. Phosphorylation of Thr-118 inactivates GLC8.

Modulator of GLC7 type-1 protein phosphatase. This Saccharomyces cerevisiae (strain ATCC 204508 / S288c) (Baker's yeast) protein is Protein GLC8 (GLC8).